The primary structure comprises 131 residues: Large ribosomal subunit protein bL19 (131 aa).

It belongs to the bacterial ribosomal protein bL19 family.

Functionally, this protein is located at the 30S-50S ribosomal subunit interface and may play a role in the structure and function of the aminoacyl-tRNA binding site. The protein is Large ribosomal subunit protein bL19 of Rhodopseudomonas palustris (strain HaA2).